The primary structure comprises 468 residues: MTMASRSFLTDRQAEELHKSIIAYLTSLNLATTANTLRAELNLPEETFDLAKAKQYEGLLEKKWTSVIRLQKKVLDLQAENAHLKNEIENAGPLALSRKNQDPANWLPKGPPRYTLEGHRLPITSVAFHPVFSSLASASEDNTIKIWDWELGELERTLKGHTKAVLDVDFGGPRGNTLLASCSSDMSIKLWDPADQYKNIRTLHGHDHIVSSVRFVPANGTAGAGGNLLVSASKDNTLKLWDVTTGYCVKTIEGHNDWPRAVAPSADGRWLLSTGSDKAARLWDIGGTEPECRVVMFGHENFNLCCEFAPSTSYPHLARLAGHEKVPPANSAAEFMATGSRDKQIRLWDRRGQCIKVLEGHDNWVRGLAFHPAGKFLISVADDRTMRCWDLSQDGKCVQTLSGMFDGFVSCVRWAPGITKDGLAGGDAGDGTPKKKTGAEANGGVQMRCVVATGSVDGTEGKVRIFAN.

The LisH domain maps to 13–45 (QAEELHKSIIAYLTSLNLATTANTLRAELNLPE). A coiled-coil region spans residues 66 to 92 (SVIRLQKKVLDLQAENAHLKNEIENAG). WD repeat units lie at residues 118 to 159 (GHRL…RTLK), 161 to 201 (HTKA…KNIR), 205 to 251 (GHDH…CVKT), 254 to 293 (GHND…PECR), 298 to 358 (GHEN…IKVL), 360 to 399 (GHDN…KCVQ), 404 to 429 (MFDG…GDAG), and 430 to 468 (DGTP…IFAN).

The protein belongs to the WD repeat LIS1/nudF family. In terms of assembly, self-associates. Interacts with NDL1 and dynein.

The protein resides in the cytoplasm. The protein localises to the cytoskeleton. Its subcellular location is the spindle pole. Functionally, positively regulates the activity of the minus-end directed microtubule motor protein dynein. May enhance dynein-mediated microtubule sliding by targeting dynein to the microtubule plus end. Required for nuclear migration during vegetative growth as well as development. Required for retrograde early endosome (EE) transport from the hyphal tip. Required for localization of dynein to the mitotic spindle poles. Recruits additional proteins to the dynein complex at SPBs. This chain is Nuclear distribution protein PAC1-2, found in Podospora anserina (strain S / ATCC MYA-4624 / DSM 980 / FGSC 10383) (Pleurage anserina).